We begin with the raw amino-acid sequence, 67 residues long: MMSKLGVLLTICLLLFPLSVLPLDGDQLADQPARHAQSAERNARFHPVKRCCPFPMCYQVPHCPCCG.

The signal sequence occupies residues 1–22 (MMSKLGVLLTICLLLFPLSVLP). The propeptide occupies 23–50 (LDGDQLADQPARHAQSAERNARFHPVKR). Disulfide bonds link C51–C65, C52–C63, and C57–C66. The residue at position 66 (C66) is a Cysteine amide.

It belongs to the conotoxin M superfamily. In terms of tissue distribution, expressed by the venom duct.

The protein resides in the secreted. This Conus regius (Crown cone) protein is Conotoxin reg3.8.